The following is a 415-amino-acid chain: von Willebrand factor A domain-containing protein 1 (415 aa).

An N-terminal signal peptide occupies residues 1–18 (MLFWTVLSMALSLRLALA). The VWFA domain maps to 34-213 (DLLFLLDSSA…ELRGAIIDAM (180 aa)). Phosphoserine is present on residues Ser-74, Ser-80, and Ser-93. Fibronectin type-III domains lie at 214–305 (QPHQ…LQEE) and 307–405 (GPER…VPQA). Asn-264 is a glycosylation site (N-linked (GlcNAc...) asparagine). An intrachain disulfide couples Cys-369 to Cys-393.

As to quaternary structure, homodimer or homomultimer; disulfide-linked. Interacts with HSPG2. In terms of processing, N-glycosylated.

The protein resides in the secreted. Its subcellular location is the extracellular space. The protein localises to the extracellular matrix. It is found in the basement membrane. Functionally, promotes matrix assembly. Involved in the organization of skeletal muscles and in the formation of neuromuscular junctions. The sequence is that of von Willebrand factor A domain-containing protein 1 (Vwa1) from Rattus norvegicus (Rat).